The following is a 275-amino-acid chain: Phosphonoacetaldehyde hydrolase (275 aa).

Asp15 (nucleophile) is an active-site residue. Mg(2+)-binding residues include Asp15 and Ala17. Lys56 (schiff-base intermediate with substrate) is an active-site residue. Asp189 is a Mg(2+) binding site.

This sequence belongs to the HAD-like hydrolase superfamily. PhnX family. As to quaternary structure, homodimer. Mg(2+) serves as cofactor.

It catalyses the reaction phosphonoacetaldehyde + H2O = acetaldehyde + phosphate + H(+). In terms of biological role, involved in phosphonate degradation. The chain is Phosphonoacetaldehyde hydrolase from Pseudomonas entomophila (strain L48).